The primary structure comprises 445 residues: Acyl-CoA Delta-4 desaturase (445 aa).

Residues alanine 19–alanine 96 enclose the Cytochrome b5 heme-binding domain. 4 helical membrane-spanning segments follow: residues leucine 132–valine 152, tryptophan 153–glutamine 173, tyrosine 266–methionine 286, and tyrosine 307–alanine 327.

Belongs to the fatty acid desaturase type 1 family.

The protein localises to the membrane. The catalysed reaction is (8Z,11Z,14Z,17Z)-eicosatetraenoyl-CoA + 2 Fe(II)-[cytochrome b5] + O2 + 2 H(+) = (5Z,8Z,11Z,14Z,17Z)-eicosapentaenoyl-CoA + 2 Fe(III)-[cytochrome b5] + 2 H2O. It carries out the reaction (7Z,10Z,13Z,16Z)-docosatetraenoyl-CoA + 2 Fe(II)-[cytochrome b5] + O2 + 2 H(+) = (4Z,7Z,10Z,13Z,16Z)-docosapentaenoyl-CoA + 2 Fe(III)-[cytochrome b5] + 2 H2O. The enzyme catalyses (7Z,10Z,13Z,16Z,19Z)-docosapentaenoyl-CoA + 2 Fe(II)-[cytochrome b5] + O2 + 2 H(+) = (4Z,7Z,10Z,13Z,16Z,19Z)-docosahexaenoyl-CoA + 2 Fe(III)-[cytochrome b5] + 2 H2O. It participates in lipid metabolism; polyunsaturated fatty acid biosynthesis. Fatty acid desaturase with bifunctional delta-4 and delta-5 activities. Component of a lipid metabolic pathway that catalyzes the biosynthesis of polyunsaturated fatty acids (PUFA) with preference toward n-3 substrates and Delta(4)function. The polypeptide is Acyl-CoA Delta-4 desaturase (Siganus canaliculatus (White-spotted spinefoot)).